A 274-amino-acid polypeptide reads, in one-letter code: MLKFKNRIVEKRVKGAEKASFGGPVLLYRTLRKVTKLYKYITDKKSFPILVTSLFALFNPNSVLAADKYSNFEELKENESPLSYNILTTDVDRRVLILAPHGGGIEGGTSELARELSKSYSAYLFEGLRIPGASELHITSTNFDEPQALDLLSKHDLTISIHGYASSKKHTLVGGTDREKAAKITSLLTDAGFSAELLSEDSRLAGTNEQNIANKNSTGMSIQLEISTEQRREMFNTFTLAGRNGTQNQVFYDYIAVLTKFINENVYCMAGVAP.

The protein belongs to the UPF0714 family.

The chain is SPbeta prophage-derived UPF0714 protein YoqZ (yoqZ) from Bacillus subtilis (strain 168).